Reading from the N-terminus, the 1465-residue chain is Ankyrin and armadillo repeat-containing protein (1465 aa).

Residues 313 to 329 form a helical membrane-spanning segment; that stretch reads MGYLKLICFLIPFLLSL. 5 ANK repeats span residues 532 to 561, 582 to 611, 615 to 644, 651 to 680, and 684 to 714; these read AGYA…NVNQ, NGPT…DYTL, RGWM…SLLE, NQCT…NWRK, and KGNN…ELPV. ARM repeat units lie at residues 745–784, 786–825, 827–865, 868–907, 910–949, and 1085–1125; these read DRYW…NIST, VSIV…DVAK, ENKD…VLCM, ESNQ…EVAR, KEVQ…SLAN, and PMSQ…CIVL. Residues 1431-1465 are disordered; that stretch reads KLGKDEQKANPDPPAFLNKLGKDEQNANPDPAESQ.

The protein localises to the membrane. The sequence is that of Ankyrin and armadillo repeat-containing protein (Ankar) from Mus musculus (Mouse).